Reading from the N-terminus, the 222-residue chain is Urease accessory protein UreF (222 aa).

Belongs to the UreF family. As to quaternary structure, ureD, UreF and UreG form a complex that acts as a GTP-hydrolysis-dependent molecular chaperone, activating the urease apoprotein by helping to assemble the nickel containing metallocenter of UreC. The UreE protein probably delivers the nickel.

Its subcellular location is the cytoplasm. In terms of biological role, required for maturation of urease via the functional incorporation of the urease nickel metallocenter. In Hahella chejuensis (strain KCTC 2396), this protein is Urease accessory protein UreF.